Reading from the N-terminus, the 369-residue chain is GTPase Obg (369 aa).

The Obg domain maps to methionine 1–leucine 159. The 175-residue stretch at alanine 160–alanine 334 folds into the OBG-type G domain. GTP-binding positions include glycine 166–serine 173, phenylalanine 191–histidine 195, aspartate 213–glycine 216, asparagine 284–aspartate 287, and serine 315–leucine 317. Residues serine 173 and threonine 193 each contribute to the Mg(2+) site. Residues glutamine 339–arginine 369 form a disordered region.

This sequence belongs to the TRAFAC class OBG-HflX-like GTPase superfamily. OBG GTPase family. In terms of assembly, monomer. It depends on Mg(2+) as a cofactor.

It localises to the cytoplasm. In terms of biological role, an essential GTPase which binds GTP, GDP and possibly (p)ppGpp with moderate affinity, with high nucleotide exchange rates and a fairly low GTP hydrolysis rate. Plays a role in control of the cell cycle, stress response, ribosome biogenesis and in those bacteria that undergo differentiation, in morphogenesis control. This is GTPase Obg from Leptothrix cholodnii (strain ATCC 51168 / LMG 8142 / SP-6) (Leptothrix discophora (strain SP-6)).